Consider the following 124-residue polypeptide: Large ribosomal subunit protein uL22 (124 aa).

Belongs to the universal ribosomal protein uL22 family. As to quaternary structure, part of the 50S ribosomal subunit.

This protein binds specifically to 23S rRNA; its binding is stimulated by other ribosomal proteins, e.g. L4, L17, and L20. It is important during the early stages of 50S assembly. It makes multiple contacts with different domains of the 23S rRNA in the assembled 50S subunit and ribosome. In terms of biological role, the globular domain of the protein is located near the polypeptide exit tunnel on the outside of the subunit, while an extended beta-hairpin is found that lines the wall of the exit tunnel in the center of the 70S ribosome. This is Large ribosomal subunit protein uL22 from Treponema pallidum (strain Nichols).